Consider the following 122-residue polypeptide: Ribosome-binding factor A (122 aa).

Belongs to the RbfA family. As to quaternary structure, monomer. Binds 30S ribosomal subunits, but not 50S ribosomal subunits or 70S ribosomes.

Its subcellular location is the cytoplasm. Functionally, one of several proteins that assist in the late maturation steps of the functional core of the 30S ribosomal subunit. Associates with free 30S ribosomal subunits (but not with 30S subunits that are part of 70S ribosomes or polysomes). Required for efficient processing of 16S rRNA. May interact with the 5'-terminal helix region of 16S rRNA. This Polaromonas naphthalenivorans (strain CJ2) protein is Ribosome-binding factor A.